The primary structure comprises 265 residues: Phosphonates import ATP-binding protein PhnC 1 (265 aa).

Positions 7 to 252 (IEVSNLSKSF…KLNEIYGTAA (246 aa)) constitute an ABC transporter domain. 39-46 (GASGSGKS) serves as a coordination point for ATP.

The protein belongs to the ABC transporter superfamily. Phosphonates importer (TC 3.A.1.9.1) family. As to quaternary structure, the complex is composed of two ATP-binding proteins (PhnC), two transmembrane proteins (PhnE) and a solute-binding protein (PhnD).

It localises to the cell inner membrane. The catalysed reaction is phosphonate(out) + ATP + H2O = phosphonate(in) + ADP + phosphate + H(+). Part of the ABC transporter complex PhnCDE involved in phosphonates import. Responsible for energy coupling to the transport system. In Nostoc sp. (strain PCC 7120 / SAG 25.82 / UTEX 2576), this protein is Phosphonates import ATP-binding protein PhnC 1.